The primary structure comprises 535 residues: EH domain-containing protein 3 (535 aa).

Methionine 1 carries the N-acetylmethionine modification. The Dynamin-type G domain occupies 55-286; sequence FDNKPMVLLV…DLFKDIQSLP (232 aa). Positions 65–72 are G1 motif; the sequence is GQYSTGKT. 65 to 72 serves as a coordination point for ATP; that stretch reads GQYSTGKT. Residues 91–92 form a G2 motif region; that stretch reads EP. Residues 153–156 are G3 motif; the sequence is DTPG. The stretch at 198–227 forms a coiled coil; sequence DEFSEVIKALKNHEDKMRVVLNKADQIETQ. The segment at 219 to 222 is G4 motif; sequence NKAD. An ATP-binding site is contributed by lysine 220. Isoleucine 243 is a region of interest (G5 motif). An ATP-binding site is contributed by tryptophan 258. Lysine 315 is covalently cross-linked (Glycyl lysine isopeptide (Lys-Gly) (interchain with G-Cter in SUMO)). Residues serine 349 and serine 456 each carry the phosphoserine modification. The EH domain maps to 444-532; sequence DKPMYDEIFY…AHLLPPSKRK (89 aa). The EF-hand domain occupies 476–511; that stretch reads LPNSVLGKIWKLADIDKDGMLDDEEFALANHLIKVK. Aspartate 489, aspartate 491, aspartate 493, methionine 495, and glutamate 500 together coordinate Ca(2+). Lysine 511 is covalently cross-linked (Glycyl lysine isopeptide (Lys-Gly) (interchain with G-Cter in SUMO)).

Belongs to the TRAFAC class dynamin-like GTPase superfamily. Dynamin/Fzo/YdjA family. EHD subfamily. Homooligomer, and heterooligomer with EHD1, EHD2 and EHD4, ATP-binding is required for heterooligomerization. Interacts with PACSIN1. Interacts with PACSIN2. Interacts (via EH domain) with MICALL1. Interacts (via EH domain) with RAB11FIP2. Interacts with ANK2. Interacts with CACNA1GG and CACNA1H.

The protein resides in the recycling endosome membrane. The protein localises to the cell membrane. It is found in the cell projection. It localises to the cilium membrane. Functionally, ATP- and membrane-binding protein that controls membrane reorganization/tubulation upon ATP hydrolysis. In vitro causes tubulation of endocytic membranes. Binding to phosphatidic acid induces its membrane tubulation activity. Plays a role in endocytic transport. Involved in early endosome to recycling endosome compartment (ERC), retrograde early endosome to Golgi, and endosome to plasma membrane (rapid recycling) protein transport. Involved in the regulation of Golgi maintenance and morphology. Involved in the recycling of internalized D1 dopamine receptor. Plays a role in cardiac protein trafficking probably implicating ANK2. Involved in the ventricular membrane targeting of SLC8A1 and CACNA1C and probably the atrial membrane localization of CACNA1GG and CACNA1H implicated in the regulation of atrial myocyte excitability and cardiac conduction. In conjunction with EHD4 may be involved in endocytic trafficking of KDR/VEGFR2 implicated in control of glomerular function. Involved in the rapid recycling of integrin beta-3 implicated in cell adhesion maintenance. Involved in the unidirectional retrograde dendritic transport of endocytosed BACE1 and in efficient sorting of BACE1 to axons implicating a function in neuronal APP processing. Plays a role in the formation of the ciliary vesicle, an early step in cilium biogenesis; possibly sharing redundant functions with Ehd1. This Rattus norvegicus (Rat) protein is EH domain-containing protein 3.